Here is a 110-residue protein sequence, read N- to C-terminus: Class I hydrophobin 2 (110 aa).

An N-terminal signal peptide occupies residues 1 to 17; it reads MQFKFLTTVALATLAVA. Cystine bridges form between C28–C89, C36–C83, C37–C71, and C90–C103. The N-linked (GlcNAc...) asparagine glycan is linked to N57.

The protein belongs to the fungal hydrophobin family. In terms of assembly, self-assembles to form functional amyloid fibrils called rodlets. Self-assembly into fibrillar rodlets occurs spontaneously at hydrophobic:hydrophilic interfaces and the rodlets further associate laterally to form amphipathic monolayers.

It localises to the secreted. The protein resides in the cell wall. Aerial growth, conidiation, and dispersal of filamentous fungi in the environment rely upon a capability of their secreting small amphipathic proteins called hydrophobins (HPBs) with low sequence identity. Class I can self-assemble into an outermost layer of rodlet bundles on aerial cell surfaces, conferring cellular hydrophobicity that supports fungal growth, development and dispersal; whereas Class II form highly ordered films at water-air interfaces through intermolecular interactions but contribute nothing to the rodlet structure. CoH2 is an asexual monokaryon-specific class I hydrophobin that is involved in aerial growth of mycelia. This Coprinopsis cinerea (Inky cap fungus) protein is Class I hydrophobin 2.